The chain runs to 550 residues: Glucose-6-phosphate isomerase (550 aa).

Glu356 serves as the catalytic Proton donor. Residues His387 and Lys515 contribute to the active site.

The protein belongs to the GPI family.

The protein localises to the cytoplasm. The catalysed reaction is alpha-D-glucose 6-phosphate = beta-D-fructose 6-phosphate. Its pathway is carbohydrate biosynthesis; gluconeogenesis. The protein operates within carbohydrate degradation; glycolysis; D-glyceraldehyde 3-phosphate and glycerone phosphate from D-glucose: step 2/4. Its function is as follows. Catalyzes the reversible isomerization of glucose-6-phosphate to fructose-6-phosphate. The protein is Glucose-6-phosphate isomerase of Aliivibrio fischeri (strain MJ11) (Vibrio fischeri).